The primary structure comprises 347 residues: UDP-N-acetylenolpyruvoylglucosamine reductase (347 aa).

Residues 24-195 (FDARARVAAR…VAVTFRLPKA (172 aa)) form the FAD-binding PCMH-type domain. Arg-171 is an active-site residue. Ser-247 functions as the Proton donor in the catalytic mechanism. The active site involves Glu-343.

Belongs to the MurB family. FAD is required as a cofactor.

It localises to the cytoplasm. The enzyme catalyses UDP-N-acetyl-alpha-D-muramate + NADP(+) = UDP-N-acetyl-3-O-(1-carboxyvinyl)-alpha-D-glucosamine + NADPH + H(+). It functions in the pathway cell wall biogenesis; peptidoglycan biosynthesis. Its function is as follows. Cell wall formation. This is UDP-N-acetylenolpyruvoylglucosamine reductase from Burkholderia pseudomallei (strain 668).